The following is a 291-amino-acid chain: ATP synthase gamma chain (291 aa).

It belongs to the ATPase gamma chain family. As to quaternary structure, F-type ATPases have 2 components, CF(1) - the catalytic core - and CF(0) - the membrane proton channel. CF(1) has five subunits: alpha(3), beta(3), gamma(1), delta(1), epsilon(1). CF(0) has three main subunits: a, b and c.

The protein localises to the cell membrane. In terms of biological role, produces ATP from ADP in the presence of a proton gradient across the membrane. The gamma chain is believed to be important in regulating ATPase activity and the flow of protons through the CF(0) complex. In Streptococcus uberis (strain ATCC BAA-854 / 0140J), this protein is ATP synthase gamma chain.